A 179-amino-acid polypeptide reads, in one-letter code: Transcription factor 21 (179 aa).

Residues 20–86 are disordered; that stretch reads CDGIKLDPNK…KQVQRNAANA (67 aa). The segment covering 34-46 has biased composition (polar residues); the sequence is SNDSNEESSTCDN. Basic residues predominate over residues 50 to 64; sequence KKGRGTSGKRRKASS. Polar residues predominate over residues 70-80; the sequence is GTINQEGKQVQ. Positions 79-131 constitute a bHLH domain; sequence VQRNAANARERARMRVLSKAFSRLKTTLPWVPPDTKLSKLDTLRLASSYIAHL.

As to quaternary structure, efficient DNA binding requires dimerization with another bHLH protein. At the start of neurulation (stage 13), expressed in the pronephros. At tailbud stage (stage 25-28), expression is high in the anterior-most branchial arch and pronephric glomus. At stage 40, staining persists in the glomus and in the epicardium region of the heart, and at stage 42, expression is higher in the glomus than in the kidney tubule or duct. In adults, expression is highest in the rectum and the spleen, with significant expression in the duodenum, heart, kidney, lungs, pancreas, skin, liver and muscle.

The protein resides in the nucleus. In terms of biological role, involved in epithelial-mesenchymal interactions in kidney and lung morphogenesis that include epithelial differentiation and branching morphogenesis. In Xenopus laevis (African clawed frog), this protein is Transcription factor 21 (tcf21).